The sequence spans 296 residues: Formylmethanofuran--tetrahydromethanopterin formyltransferase-like protein (296 aa).

It belongs to the FTR family.

The sequence is that of Formylmethanofuran--tetrahydromethanopterin formyltransferase-like protein (ehaS) from Methanothermobacter marburgensis (strain ATCC BAA-927 / DSM 2133 / JCM 14651 / NBRC 100331 / OCM 82 / Marburg) (Methanobacterium thermoautotrophicum).